The primary structure comprises 489 residues: UDP-N-acetylmuramate--L-alanine ligase (489 aa).

130–136 (GTHGKTS) lines the ATP pocket.

It belongs to the MurCDEF family.

The protein localises to the cytoplasm. It carries out the reaction UDP-N-acetyl-alpha-D-muramate + L-alanine + ATP = UDP-N-acetyl-alpha-D-muramoyl-L-alanine + ADP + phosphate + H(+). The protein operates within cell wall biogenesis; peptidoglycan biosynthesis. In terms of biological role, cell wall formation. This Corynebacterium efficiens (strain DSM 44549 / YS-314 / AJ 12310 / JCM 11189 / NBRC 100395) protein is UDP-N-acetylmuramate--L-alanine ligase.